The primary structure comprises 1379 residues: ABC multidrug transporter MDR2 (1379 aa).

Residues isoleucine 65 to leucine 85 traverse the membrane as a helical segment. The ABC transmembrane type-1 1 domain maps to valine 69–serine 367. An N-linked (GlcNAc...) asparagine glycan is attached at asparagine 97. 5 consecutive transmembrane segments (helical) span residues valine 119–cysteine 139, lysine 193–leucine 213, valine 215–glycine 235, isoleucine 301–glycine 321, and valine 336–serine 356. An ABC transporter 1 domain is found at isoleucine 403–leucine 682. Glycine 438–serine 445 is an ATP binding site. 2 N-linked (GlcNAc...) asparagine glycosylation sites follow: asparagine 552 and asparagine 633. The interval tyrosine 738 to lysine 758 is disordered. Transmembrane regions (helical) follow at residues leucine 781–glycine 801, glycine 820–valine 840, isoleucine 901–isoleucine 921, and alanine 922–leucine 942. The ABC transmembrane type-1 2 domain occupies leucine 781–lysine 1068. N-linked (GlcNAc...) asparagine glycosylation occurs at asparagine 989. 2 helical membrane-spanning segments follow: residues phenylalanine 1008–glycine 1028 and isoleucine 1032–serine 1052. The region spanning valine 1135–histidine 1374 is the ABC transporter 2 domain. Glycine 1170–serine 1177 is an ATP binding site.

The protein belongs to the ABC transporter superfamily. ABCB family. Multidrug resistance exporter (TC 3.A.1.201) subfamily.

The protein localises to the cell membrane. Functionally, pleiotropic ABC efflux transporter that may be involved in the modulation susceptibility to a wide range of unrelated cytotoxic compounds. The protein is ABC multidrug transporter MDR2 of Trichophyton equinum (strain ATCC MYA-4606 / CBS 127.97) (Horse ringworm fungus).